A 40-amino-acid chain; its full sequence is Mu-thomitoxin-Hme1b (40 aa).

3 cysteine pairs are disulfide-bonded: cysteine 2–cysteine 18, cysteine 9–cysteine 22, and cysteine 17–cysteine 33.

It belongs to the neurotoxin 19 (CSTX) family. Contains 3 disulfide bonds. As to expression, expressed by the venom gland.

The protein resides in the secreted. In terms of biological role, blocks the Nav1.2/SCN2A, Nav1.4/SCN4A, Nav1.5/SCN5A and Nav1.6/SCN8A sodium channels. Shows a slight preference for the Nav1.2 and Nav1.4 channels. Reduces the peak amplitude of the sodium current and negatively shifts the steady-state inactivation process. Does not shift the threshold potential of activation or the voltage corresponding to maximal current. Does not change the reversal potential of the sodium current. May act on site 1 of the receptor. This chain is Mu-thomitoxin-Hme1b, found in Heriaeus mellotteei (Crab spider).